Consider the following 257-residue polypeptide: Imidazole glycerol phosphate synthase subunit HisF (257 aa).

Catalysis depends on residues Asp-11 and Asp-130.

Belongs to the HisA/HisF family. In terms of assembly, heterodimer of HisH and HisF.

Its subcellular location is the cytoplasm. The enzyme catalyses 5-[(5-phospho-1-deoxy-D-ribulos-1-ylimino)methylamino]-1-(5-phospho-beta-D-ribosyl)imidazole-4-carboxamide + L-glutamine = D-erythro-1-(imidazol-4-yl)glycerol 3-phosphate + 5-amino-1-(5-phospho-beta-D-ribosyl)imidazole-4-carboxamide + L-glutamate + H(+). It functions in the pathway amino-acid biosynthesis; L-histidine biosynthesis; L-histidine from 5-phospho-alpha-D-ribose 1-diphosphate: step 5/9. In terms of biological role, IGPS catalyzes the conversion of PRFAR and glutamine to IGP, AICAR and glutamate. The HisF subunit catalyzes the cyclization activity that produces IGP and AICAR from PRFAR using the ammonia provided by the HisH subunit. This is Imidazole glycerol phosphate synthase subunit HisF from Psychromonas ingrahamii (strain DSM 17664 / CCUG 51855 / 37).